Reading from the N-terminus, the 313-residue chain is tRNA dimethylallyltransferase (313 aa).

Position 13–20 (13–20) interacts with ATP; sequence GPTASGKT. 15–20 lines the substrate pocket; sequence TASGKT. Interaction with substrate tRNA regions lie at residues 38–41, 162–166, 243–248, and 276–283; these read DSAL, QRLSR, RCVGYR, and KRQITWLR.

This sequence belongs to the IPP transferase family. Monomer. Mg(2+) serves as cofactor.

It catalyses the reaction adenosine(37) in tRNA + dimethylallyl diphosphate = N(6)-dimethylallyladenosine(37) in tRNA + diphosphate. Functionally, catalyzes the transfer of a dimethylallyl group onto the adenine at position 37 in tRNAs that read codons beginning with uridine, leading to the formation of N6-(dimethylallyl)adenosine (i(6)A). The sequence is that of tRNA dimethylallyltransferase from Aliivibrio salmonicida (strain LFI1238) (Vibrio salmonicida (strain LFI1238)).